We begin with the raw amino-acid sequence, 122 residues long: Large ribosomal subunit protein uL18 (122 aa).

This sequence belongs to the universal ribosomal protein uL18 family. As to quaternary structure, part of the 50S ribosomal subunit; part of the 5S rRNA/L5/L18/L25 subcomplex. Contacts the 5S and 23S rRNAs.

This is one of the proteins that bind and probably mediate the attachment of the 5S RNA into the large ribosomal subunit, where it forms part of the central protuberance. In Prochlorococcus marinus (strain MIT 9215), this protein is Large ribosomal subunit protein uL18.